A 356-amino-acid polypeptide reads, in one-letter code: uncharacterized protein (356 aa).

The next 6 membrane-spanning stretches (helical) occupy residues 7 to 29, 49 to 71, 91 to 113, 270 to 292, 299 to 316, and 329 to 348; these read LLSR…VSLY, YFLN…ISLI, ISPL…TFLL, LFYR…YLFF, QVIP…LVIL, and VLYS…KGVY.

Its subcellular location is the cell membrane. This is an uncharacterized protein from Aquifex aeolicus (strain VF5).